The following is an 814-amino-acid chain: Origin of replication complex subunit 1 (814 aa).

Residues 1-15 (MDLSATPSRSKSGLR) are compositionally biased toward polar residues. The segment at 1-127 (MDLSATPSRS…PKKPKKRAYY (127 aa)) is disordered. 2 stretches are compositionally biased toward low complexity: residues 51–62 (APMSPVTPSSVR) and 69–80 (ETPTKVTSETPV). A Nuclear localization signal motif is present at residues 105-112 (PKRQRQRQ). The span at 108 to 127 (QRQRQRQRQQPKKPKKRAYY) shows a compositional bias: basic residues. A histone H3 binding region spans residues 157-181 (DPEAEECRVCFRAGAAVMVECDVCL). Residues 160–209 (AEECRVCFRAGAAVMVECDVCLGGFHLRCVRPPLRRVPEGDWACPYCEAE) form a PHD-type zinc finger. The Zn(2+) site is built by Cys-163, Cys-166, Cys-177, Cys-180, His-185, and Cys-188. Residues 197–201 (PEGDW) form a histone H3 binding region. Cys-203 and Cys-206 together coordinate Zn(2+). The region spanning 218–335 (PKPPEGKRIV…IHWHNFKRLA (118 aa)) is the BAH domain. The interval 310–315 (ASDQGD) is histone H3 binding. Acidic residues-rich tracts occupy residues 339–349 (DEPETKEDPGD) and 360–373 (SDSDEDSEYDEEEE). The segment at 339 to 384 (DEPETKEDPGDEPYNAGNDYVSDSDEDSEYDEEEEPTKCSSARTHQ) is disordered. The interval 433–804 (PKSLPCRDKE…DDVTFALKES (372 aa)) is necessary and sufficient for ORC complex assembly. Residues 468–475 (GVPGTGKT) and 468–476 (GVPGTGKTM) each bind ATP. Mg(2+) contacts are provided by Asp-558 and Glu-559. 3 residues coordinate ATP: Glu-559, Asn-592, and Arg-657.

The protein belongs to the ORC1 family. As to quaternary structure, component of the origin recognition complex (ORC) composed of at least ORC1, ORC2, ORC3, ORC4, ORC5 and ORC6. ORC is regulated in a cell-cycle and development dependent manner. It is sequentially assembled at the exit from anaphase of mitosis and disassembled as cells enter S phase. Binds unmodified and methylated histone H3. Expressed strongly in root tips and shoot apical meristem (SAM), and weakly in young leaves. Not detected in mature leaves.

It is found in the nucleus. In terms of biological role, essential protein. Component of the origin recognition complex (ORC) that binds origins of replication. It has a role in both chromosomal replication and mating type transcriptional silencing. Binds to the ARS consensus sequence (ACS) of origins of replication. H3K4me3 effector that positively regulates the transcription of a subset of genes. Required for cell proliferation. The chain is Origin of replication complex subunit 1 from Oryza sativa subsp. japonica (Rice).